We begin with the raw amino-acid sequence, 115 residues long: Large ribosomal subunit protein uL18 (115 aa).

This sequence belongs to the universal ribosomal protein uL18 family. As to quaternary structure, part of the 50S ribosomal subunit; part of the 5S rRNA/L5/L18/L25 subcomplex. Contacts the 5S and 23S rRNAs.

This is one of the proteins that bind and probably mediate the attachment of the 5S RNA into the large ribosomal subunit, where it forms part of the central protuberance. This Ruthia magnifica subsp. Calyptogena magnifica protein is Large ribosomal subunit protein uL18.